A 351-amino-acid chain; its full sequence is MTTLTLAELATITGGELFGDPTALVSAVAPMDKAQLGHVTFLSNPKYSKHLGDCKATVIMVKTSERELCPSNALVVADPYVAFAKVAQALDSTPSPAHGIAPSAVIAEDAKLGHNVSIGANAVIESGVQLGDNVVIGAGCFIGKQARLGDNTKLWANVTIYHKVEIGSDCLIQSGTVIGADGFGYANERGEWIKIPQLGSVRIGDRVEIGACTTIDRGALDDTVIEDNVIIDNQLQIAHNVHIGYGSALAGGTVIAGSTRIGKYCIIGGASVINGHIEIADGVTITGMGMVMRSIEEKGMYSSGIPLQTNKEWRKTAARVHRIDDMHKRLKALEKLLEQSDTVQPDNSQAE.

Histidine 239 functions as the Proton acceptor in the catalytic mechanism.

This sequence belongs to the transferase hexapeptide repeat family. LpxD subfamily. As to quaternary structure, homotrimer.

It carries out the reaction a UDP-3-O-[(3R)-3-hydroxyacyl]-alpha-D-glucosamine + a (3R)-hydroxyacyl-[ACP] = a UDP-2-N,3-O-bis[(3R)-3-hydroxyacyl]-alpha-D-glucosamine + holo-[ACP] + H(+). It participates in bacterial outer membrane biogenesis; LPS lipid A biosynthesis. Catalyzes the N-acylation of UDP-3-O-acylglucosamine using 3-hydroxyacyl-ACP as the acyl donor. Is involved in the biosynthesis of lipid A, a phosphorylated glycolipid that anchors the lipopolysaccharide to the outer membrane of the cell. The sequence is that of UDP-3-O-acylglucosamine N-acyltransferase from Vibrio cholerae serotype O1 (strain ATCC 39315 / El Tor Inaba N16961).